Consider the following 310-residue polypeptide: D-alanine--D-alanine ligase (310 aa).

Residues 107 to 305 (KKVWQSAGLP…FSALVQSILA (199 aa)) form the ATP-grasp domain. 134 to 189 (EQLHCQDFVIKPALEGSSVGVSRVKNQEQLAAAIPFAGGARAKIMAEPWIVGRELT) contacts ATP. The Mg(2+) site is built by Asp259, Glu272, and Asn274.

The protein belongs to the D-alanine--D-alanine ligase family. It depends on Mg(2+) as a cofactor. Requires Mn(2+) as cofactor.

Its subcellular location is the cytoplasm. The catalysed reaction is 2 D-alanine + ATP = D-alanyl-D-alanine + ADP + phosphate + H(+). Its pathway is cell wall biogenesis; peptidoglycan biosynthesis. Functionally, cell wall formation. In Dichelobacter nodosus (strain VCS1703A), this protein is D-alanine--D-alanine ligase.